The following is a 266-amino-acid chain: Tryptophan synthase alpha chain (266 aa).

Residues Glu51 and Asp62 each act as proton acceptor in the active site.

Belongs to the TrpA family. Tetramer of two alpha and two beta chains.

It catalyses the reaction (1S,2R)-1-C-(indol-3-yl)glycerol 3-phosphate + L-serine = D-glyceraldehyde 3-phosphate + L-tryptophan + H2O. The protein operates within amino-acid biosynthesis; L-tryptophan biosynthesis; L-tryptophan from chorismate: step 5/5. Its function is as follows. The alpha subunit is responsible for the aldol cleavage of indoleglycerol phosphate to indole and glyceraldehyde 3-phosphate. This is Tryptophan synthase alpha chain from Thermosynechococcus vestitus (strain NIES-2133 / IAM M-273 / BP-1).